A 362-amino-acid chain; its full sequence is Aminomethyltransferase (362 aa).

This sequence belongs to the GcvT family. As to quaternary structure, the glycine cleavage system is composed of four proteins: P, T, L and H.

The enzyme catalyses N(6)-[(R)-S(8)-aminomethyldihydrolipoyl]-L-lysyl-[protein] + (6S)-5,6,7,8-tetrahydrofolate = N(6)-[(R)-dihydrolipoyl]-L-lysyl-[protein] + (6R)-5,10-methylene-5,6,7,8-tetrahydrofolate + NH4(+). Its function is as follows. The glycine cleavage system catalyzes the degradation of glycine. This chain is Aminomethyltransferase, found in Pseudothermotoga lettingae (strain ATCC BAA-301 / DSM 14385 / NBRC 107922 / TMO) (Thermotoga lettingae).